The following is a 672-amino-acid chain: SHC SH2 domain-binding protein 1 (672 aa).

Position 2 is an N-acetylalanine (A2). The residue at position 5 (S5) is a Phosphoserine. T7 is subject to Phosphothreonine. S31, S42, S44, S47, and S273 each carry phosphoserine. 5 PbH1 repeats span residues 428–451, 452–473, 474–496, 497–518, and 526–548; these read GADI…LIVH, RGKT…TVRT, SAEF…EIYP, GSQC…LIKD, and IPKI…VLVK. The residue at position 634 (S634) is a Phosphoserine.

In terms of assembly, interacts directly with isoform p52shc of SHC1 via its SH2 domain. Interacts with TRIM71; leading to enhanced SHCBP1 protein stability. Interacts with both members of the centralspindlin complex, KIF23 and RACGAP1.

Its subcellular location is the midbody. It localises to the cytoplasm. The protein localises to the cytoskeleton. The protein resides in the spindle. May play a role in signaling pathways governing cellular proliferation, cell growth and differentiation. May be a component of a novel signaling pathway downstream of Shc. Acts as a positive regulator of FGF signaling in neural progenitor cells. This chain is SHC SH2 domain-binding protein 1 (SHCBP1), found in Homo sapiens (Human).